Here is a 198-residue protein sequence, read N- to C-terminus: Type 1 fimbriae regulatory protein FimE (198 aa).

The Tyr recombinase domain occupies 2–184; it reads SKRRYLTGKE…NAARFAGLWE (183 aa). Active-site residues include Arg-41, Lys-66, His-136, Arg-139, and His-162. The active-site O-(3'-phospho-DNA)-tyrosine intermediate is Tyr-171.

Belongs to the 'phage' integrase family.

Its function is as follows. FimE is one of the 2 regulatory proteins which control the phase variation of type 1 fimbriae in E.coli. These proteins mediate the periodic inversion of a 300bp DNA segment that harbors the promoter for the fimbrial structural gene, fimA. FimE switches fimA off. The polypeptide is Type 1 fimbriae regulatory protein FimE (fimE) (Escherichia coli O6:H1 (strain CFT073 / ATCC 700928 / UPEC)).